Reading from the N-terminus, the 95-residue chain is Co-chaperonin GroES (95 aa).

The protein belongs to the GroES chaperonin family. Heptamer of 7 subunits arranged in a ring. Interacts with the chaperonin GroEL.

The protein resides in the cytoplasm. Together with the chaperonin GroEL, plays an essential role in assisting protein folding. The GroEL-GroES system forms a nano-cage that allows encapsulation of the non-native substrate proteins and provides a physical environment optimized to promote and accelerate protein folding. GroES binds to the apical surface of the GroEL ring, thereby capping the opening of the GroEL channel. This Novosphingobium aromaticivorans (strain ATCC 700278 / DSM 12444 / CCUG 56034 / CIP 105152 / NBRC 16084 / F199) protein is Co-chaperonin GroES.